The chain runs to 360 residues: Hydroxyproline O-arabinosyltransferase RDN2 (360 aa).

The helical; Signal-anchor transmembrane segment at 13 to 33 (VLGSSFATYNLVTMIIHYGSA) threads the bilayer.

It localises to the golgi apparatus membrane. It carries out the reaction trans-4-hydroxy-L-prolyl-[protein] + UDP-beta-L-arabinofuranose = O-(beta-L-arabinofuranosyl)-trans-4-hydroxy-L-prolyl-[protein] + UDP + H(+). Glycosyltransferase involved in the O-arabinosylation of several proteins including extensins and small signaling peptides. Catalyzes the transfer of the initial L-arabinose to the hydroxyl group of Hyp residues. Probably involved in the arabinosylation of CLAVATA3/ESR-related (CLE) signaling peptides that move from root to shoot, to interact with SUNN receptor kinase signaling that regulates nodulation. Involved in long distance nodulation signaling events. Involved in the autoregulation of nodulation (AON), a long distance systemic signaling from root to shoot and back again, which allows legumes to limit the number of root nodules formed based on available nitrogen and previous rhizobial colonization. Functions in the root, upstream of the shoot receptor kinase SUNN and via CLE peptide, to control AON. The sequence is that of Hydroxyproline O-arabinosyltransferase RDN2 from Medicago truncatula (Barrel medic).